Here is a 101-residue protein sequence, read N- to C-terminus: Small ribosomal subunit protein uS14 (101 aa).

It belongs to the universal ribosomal protein uS14 family. In terms of assembly, part of the 30S ribosomal subunit. Contacts proteins S3 and S10.

Its function is as follows. Binds 16S rRNA, required for the assembly of 30S particles and may also be responsible for determining the conformation of the 16S rRNA at the A site. This is Small ribosomal subunit protein uS14 from Xylella fastidiosa (strain 9a5c).